The chain runs to 61 residues: Large ribosomal subunit protein eL24 (61 aa).

Zn(2+) contacts are provided by Cys-7, Cys-10, Cys-33, and Cys-37. The C4-type zinc-finger motif lies at 7-37 (CSFCGHEIPPGTGLMYVRNDGTMLWFCSSKC).

This sequence belongs to the eukaryotic ribosomal protein eL24 family. In terms of assembly, part of the 50S ribosomal subunit. Forms a cluster with proteins L3 and L14. The cofactor is Zn(2+).

In terms of biological role, binds to the 23S rRNA. This chain is Large ribosomal subunit protein eL24, found in Saccharolobus islandicus (strain M.16.27) (Sulfolobus islandicus).